The primary structure comprises 388 residues: Succinate--CoA ligase [ADP-forming] subunit beta (388 aa).

Positions Lys9–His244 constitute an ATP-grasp domain. ATP contacts are provided by residues Lys46, Gly53–Gly55, Glu99, Thr102, and Glu107. 2 residues coordinate Mg(2+): Asn199 and Asp213. Residues Asn264 and Gly321 to Val323 contribute to the substrate site.

This sequence belongs to the succinate/malate CoA ligase beta subunit family. As to quaternary structure, heterotetramer of two alpha and two beta subunits. The cofactor is Mg(2+).

It carries out the reaction succinate + ATP + CoA = succinyl-CoA + ADP + phosphate. The enzyme catalyses GTP + succinate + CoA = succinyl-CoA + GDP + phosphate. It participates in carbohydrate metabolism; tricarboxylic acid cycle; succinate from succinyl-CoA (ligase route): step 1/1. Succinyl-CoA synthetase functions in the citric acid cycle (TCA), coupling the hydrolysis of succinyl-CoA to the synthesis of either ATP or GTP and thus represents the only step of substrate-level phosphorylation in the TCA. The beta subunit provides nucleotide specificity of the enzyme and binds the substrate succinate, while the binding sites for coenzyme A and phosphate are found in the alpha subunit. The sequence is that of Succinate--CoA ligase [ADP-forming] subunit beta from Pseudomonas putida (strain GB-1).